Consider the following 862-residue polypeptide: Kinesin-like protein KIN-7E (862 aa).

Residues 24-346 (KILVLVRLRP…LLFACCAKEV (323 aa)) enclose the Kinesin motor domain. 110-117 (GQTSSGKT) contributes to the ATP binding site. The stretch at 355–428 (VMSDKALVKQ…RLEDFMKMVE (74 aa)) forms a coiled coil. Disordered regions lie at residues 463 to 505 (RTSF…QSEE) and 542 to 632 (ANGE…TPLV). Positions 465–476 (SFISDGTSTPLS) are enriched in polar residues. Positions 494 to 505 (MSPRHSGDQSEE) are enriched in basic and acidic residues. Over residues 612 to 621 (DSMTSRGSDS) the composition is skewed to polar residues. Residue Lys734 forms a Glycyl lysine isopeptide (Lys-Gly) (interchain with G-Cter in ubiquitin) linkage.

It belongs to the TRAFAC class myosin-kinesin ATPase superfamily. Kinesin family. KIN-7 subfamily.

This is Kinesin-like protein KIN-7E from Arabidopsis thaliana (Mouse-ear cress).